Consider the following 472-residue polypeptide: ATP-dependent rRNA helicase rrp3 (472 aa).

The segment at 1–51 is disordered; it reads MPDVKKRKIAHEAPEHGSDAESTSSHESVAQQDDTAETQDEAAATETRPAP. Positions 10–19 are enriched in basic and acidic residues; sequence AHEAPEHGSD. The segment covering 20–29 has biased composition (polar residues); the sequence is AESTSSHESV. Residues 52–80 carry the Q motif motif; sequence KSFKDLGIIDQLCEACETMGYKAPTPIQA. The region spanning 83 to 254 is the Helicase ATP-binding domain; that stretch reads IPLALQGRDL…RASLSNPLRV (172 aa). Position 96–103 (96–103) interacts with ATP; the sequence is AETGSGKT. The DEAD box signature appears at 202 to 205; it reads DEAD. The Helicase C-terminal domain maps to 282 to 426; that stretch reads YLVYLLNEFV…EYELEKDEVM (145 aa). Residues 451 to 472 are disordered; it reads GTKAKKFGKGKRSRDEMDQEEG. Positions 452-462 are enriched in basic residues; the sequence is TKAKKFGKGKR.

Belongs to the DEAD box helicase family. DDX47/RRP3 subfamily. As to quaternary structure, interacts with the SSU processome.

It is found in the nucleus. It carries out the reaction ATP + H2O = ADP + phosphate + H(+). Functionally, ATP-dependent rRNA helicase required for pre-ribosomal RNA processing. Involved in the maturation of the 35S-pre-rRNA and to its cleavage to mature 18S rRNA. The chain is ATP-dependent rRNA helicase rrp3 from Neosartorya fischeri (strain ATCC 1020 / DSM 3700 / CBS 544.65 / FGSC A1164 / JCM 1740 / NRRL 181 / WB 181) (Aspergillus fischerianus).